A 782-amino-acid polypeptide reads, in one-letter code: LPS-assembly protein LptD (782 aa).

The N-terminal stretch at 1 to 23 (MNKKHTLISLAILTALYSQQSLA) is a signal peptide.

This sequence belongs to the LptD family. In terms of assembly, component of the lipopolysaccharide transport and assembly complex. Interacts with LptE and LptA.

The protein resides in the cell outer membrane. In terms of biological role, together with LptE, is involved in the assembly of lipopolysaccharide (LPS) at the surface of the outer membrane. This is LPS-assembly protein LptD from Haemophilus influenzae (strain ATCC 51907 / DSM 11121 / KW20 / Rd).